A 917-amino-acid chain; its full sequence is Lipoxygenase 6, chloroplastic (917 aa).

A chloroplast-targeting transit peptide spans 1 to 40; it reads MFVASPVKTNFNGVSLVKSPAFSALSCRKQHRVPISRQVR. Basic and acidic residues predominate over residues 46 to 57; it reads EEKAVDQEDGKK. The interval 46-66 is disordered; the sequence is EEKAVDQEDGKKSTNKPLINS. Residues 98 to 216 form the PLAT domain; sequence ERFEHQLELF…DNPQARIIFR (119 aa). The Lipoxygenase domain maps to 219–917; it reads PCLPSETPDG…GRGIPNSISI (699 aa). Fe cation-binding residues include His-575, His-580, His-767, and Asn-771. The interval 880–904 is disordered; the sequence is KDKKLKNRTGAGMPPYELLLPTSPH. Ile-917 is a binding site for Fe cation.

Belongs to the lipoxygenase family. Fe cation is required as a cofactor.

It localises to the plastid. The protein resides in the chloroplast. It catalyses the reaction (9Z,12Z)-octadecadienoate + O2 = (13S)-hydroperoxy-(9Z,11E)-octadecadienoate. It carries out the reaction (9Z,12Z,15Z)-octadecatrienoate + O2 = (13S)-hydroperoxy-(9Z,11E,15Z)-octadecatrienoate. The protein operates within lipid metabolism; oxylipin biosynthesis. Functionally, plant lipoxygenases may be involved in a number of diverse aspects of plant physiology including growth and development, pest resistance, and senescence or responses to wounding. Catalyzes the hydroperoxidation of lipids containing a cis,cis-1,4-pentadiene structure. 13S-lipoxygenase that can use linolenic acid as substrates. The sequence is that of Lipoxygenase 6, chloroplastic from Arabidopsis thaliana (Mouse-ear cress).